The sequence spans 345 residues: Protein RecA (345 aa).

Position 65-72 (65-72 (GPESSGKT)) interacts with ATP.

It belongs to the RecA family.

It localises to the cytoplasm. Can catalyze the hydrolysis of ATP in the presence of single-stranded DNA, the ATP-dependent uptake of single-stranded DNA by duplex DNA, and the ATP-dependent hybridization of homologous single-stranded DNAs. It interacts with LexA causing its activation and leading to its autocatalytic cleavage. The polypeptide is Protein RecA (Campylobacter fetus subsp. fetus (strain 82-40)).